The sequence spans 505 residues: Glycerol kinase 2 (505 aa).

Residue threonine 17 coordinates ADP. ATP is bound by residues threonine 17, threonine 18, and serine 19. Position 17 (threonine 17) interacts with sn-glycerol 3-phosphate. An ADP-binding site is contributed by arginine 21. 4 residues coordinate sn-glycerol 3-phosphate: arginine 87, glutamate 88, tyrosine 139, and aspartate 249. Glycerol contacts are provided by arginine 87, glutamate 88, tyrosine 139, aspartate 249, and glutamine 250. ADP-binding residues include threonine 271 and glycine 314. ATP is bound by residues threonine 271, glycine 314, glutamine 318, and glycine 415. ADP contacts are provided by glycine 415 and asparagine 419.

It belongs to the FGGY kinase family.

It catalyses the reaction glycerol + ATP = sn-glycerol 3-phosphate + ADP + H(+). It participates in polyol metabolism; glycerol degradation via glycerol kinase pathway; sn-glycerol 3-phosphate from glycerol: step 1/1. With respect to regulation, inhibited by fructose 1,6-bisphosphate (FBP). In terms of biological role, key enzyme in the regulation of glycerol uptake and metabolism. Catalyzes the phosphorylation of glycerol to yield sn-glycerol 3-phosphate. This Pseudomonas aeruginosa (strain ATCC 15692 / DSM 22644 / CIP 104116 / JCM 14847 / LMG 12228 / 1C / PRS 101 / PAO1) protein is Glycerol kinase 2.